A 111-amino-acid chain; its full sequence is Large ribosomal subunit protein uL22 (111 aa).

It belongs to the universal ribosomal protein uL22 family. In terms of assembly, part of the 50S ribosomal subunit.

Its function is as follows. This protein binds specifically to 23S rRNA; its binding is stimulated by other ribosomal proteins, e.g. L4, L17, and L20. It is important during the early stages of 50S assembly. It makes multiple contacts with different domains of the 23S rRNA in the assembled 50S subunit and ribosome. The globular domain of the protein is located near the polypeptide exit tunnel on the outside of the subunit, while an extended beta-hairpin is found that lines the wall of the exit tunnel in the center of the 70S ribosome. This Clostridium kluyveri (strain NBRC 12016) protein is Large ribosomal subunit protein uL22.